The sequence spans 462 residues: S-alkyl-thiohydroximate lyase SUR1 (462 aa).

This sequence belongs to the class-I pyridoxal-phosphate-dependent aminotransferase family. Requires pyridoxal 5'-phosphate as cofactor.

In terms of biological role, C-S lyase involved in glucosinolate biosynthesis. Converts S-(alkylacetohydroximoyl)-L-cysteine to thiohydroximate. Functions in auxin homeostasis. Probably required for glucosinolate activation in response to pathogens. The chain is S-alkyl-thiohydroximate lyase SUR1 (SUR1) from Arabidopsis thaliana (Mouse-ear cress).